Here is a 281-residue protein sequence, read N- to C-terminus: 3'-5' exonuclease Snipper (281 aa).

The disordered stretch occupies residues 19–52; it reads DGARPDPNNDPEESFNEDEVTEANSVPAKSKKSR. Residues 27-39 are compositionally biased toward acidic residues; sequence NDPEESFNEDEVT. The region spanning 64–262 is the Exonuclease domain; that stretch reads YVIAVDFEAT…MCKMVRDGAL (199 aa). 2 residues coordinate Mg(2+): Asp-69 and Glu-71. The active-site Proton acceptor is Glu-71. AMP contacts are provided by Glu-71 and Ala-72. Asp-183 contributes to the Mg(2+) binding site. His-240 serves as the catalytic Proton acceptor. His-240 provides a ligand contact to AMP. Asp-245 lines the Mg(2+) pocket.

The protein belongs to the ERI2 family. Requires Mg(2+) as cofactor.

The protein resides in the cytoplasm. It localises to the nucleus. Its subcellular location is the nucleolus. Functionally, a broad-specificity exonuclease, capable of degrading both structure-specific DNA and RNA targets without sequence specificity in vitro. Requires two to five unpaired nucleotides in the 3' region for efficient binding and nuclease activity. Binds with higher affinity to RNA and DNA stem-loop substrates compared to single-stranded substrate. Binds to the 3'-end of histone mRNAs and degrades them, suggesting that it might play a role in histone mRNA decay after replication. Can readily cleave the histone stem-loop RNA beyond the -12 (UUU) position in the loop to produce -14 and then -16 oligonucleotide fragments for both the stem-loop and the reverse stem-loop. Cleaves both the single-stranded 3' flank as well as the double-stranded stem portion of histone stem-loop RNA. Might affect histone mRNA 3' processing thereby regulating histone protein expression. Has an important role in development and tissue formation. Might have a role in 5.8S rRNA precursor processing. The protein is 3'-5' exonuclease Snipper of Drosophila melanogaster (Fruit fly).